A 522-amino-acid polypeptide reads, in one-letter code: 2-isopropylmalate synthase (522 aa).

In terms of domain architecture, Pyruvate carboxyltransferase spans 5–267; that stretch reads VIIFDTTLRD…HTRINHQEIY (263 aa). Mn(2+) is bound by residues D14, H202, H204, and N238. Residues 392–522 are regulatory domain; it reads RLDTFNVQSG…SQVKDQKETV (131 aa).

Belongs to the alpha-IPM synthase/homocitrate synthase family. LeuA type 1 subfamily. In terms of assembly, homodimer. The cofactor is Mn(2+).

It is found in the cytoplasm. It catalyses the reaction 3-methyl-2-oxobutanoate + acetyl-CoA + H2O = (2S)-2-isopropylmalate + CoA + H(+). It participates in amino-acid biosynthesis; L-leucine biosynthesis; L-leucine from 3-methyl-2-oxobutanoate: step 1/4. Functionally, catalyzes the condensation of the acetyl group of acetyl-CoA with 3-methyl-2-oxobutanoate (2-ketoisovalerate) to form 3-carboxy-3-hydroxy-4-methylpentanoate (2-isopropylmalate). The chain is 2-isopropylmalate synthase from Erwinia tasmaniensis (strain DSM 17950 / CFBP 7177 / CIP 109463 / NCPPB 4357 / Et1/99).